Reading from the N-terminus, the 392-residue chain is L-rhamnonate dehydratase (392 aa).

The substrate site is built by His22 and Arg48. Residues Asp214, Glu240, and Glu268 each coordinate Mg(2+). The active-site Proton acceptor is the His318. Glu338 provides a ligand contact to substrate.

This sequence belongs to the mandelate racemase/muconate lactonizing enzyme family. RhamD subfamily. In terms of assembly, homooctamer; tetramer of dimers. It depends on Mg(2+) as a cofactor.

It carries out the reaction L-rhamnonate = 2-dehydro-3-deoxy-L-rhamnonate + H2O. Catalyzes the dehydration of L-rhamnonate to 2-keto-3-deoxy-L-rhamnonate (KDR). The sequence is that of L-rhamnonate dehydratase from Burkholderia cenocepacia (strain HI2424).